Here is a 216-residue protein sequence, read N- to C-terminus: MGTRDDEYDYLFKVVLIGDSGVGKSNLLSRFTRNEFNLESKSTIGVEFATRSIQVDGKTIKAQIWDTAGQERYRAITSAYYRGAVGALLVYDIAKHLTYENVERWLKELRDHADSNIVIMLVGNKSDLRHLRAVPTDEARAFAEKNGLSFIETSALDSTNVEAAFQTILTEIYRIVSQKQMSDRRENDMSPSNNVVPIHVPPTTENKPKVQCCQNI.

An N-acetylglycine modification is found at G2. S20, G21, V22, G23, K24, S25, N26, N37, L38, S40, S42, and T43 together coordinate GTP. Mg(2+) is bound at residue S25. A Switch 1 motif is present at residues 36-47; the sequence is FNLESKSTIGVE. Mg(2+) is bound by residues T43 and D66. A Switch 2 motif is present at residues 67–86; sequence TAGQERYRAITSAYYRGAVG. GTP is bound by residues G69, N124, K125, D127, A155, and L156. The segment at 183–211 is disordered; the sequence is DRRENDMSPSNNVVPIHVPPTTENKPKVQ. 2 S-geranylgeranyl cysteine lipidation sites follow: C212 and C213. Cysteine methyl ester is present on C213. A propeptide spans 214–216 (removed in mature form); the sequence is QNI.

The protein belongs to the small GTPase superfamily. Rab family. Interacts (GTP-bound form) with RAB11FIPs (via their C-termini) including RAB11FIP1, RAB11FIP2, RAB11FIP3, RAB11FIP4 and RAB11FIP5 effectors. Forms a complex with RAB11FIP3 and dynein intermediate chain DYNC1LI1; the interaction between RAB11A1 and RAB11FIP3 is direct; the complex regulates endocytic trafficking. Interacts with EVI5; EVI5 and RAB11FIP3 may be mutually exclusive and compete for binding RAB11A. Interacts with SGSM1, SGSM2, SGSM3 and VIPAS39. Interacts with EXOC6 in a GTP-dependent manner. Interacts with RAB11FIP5. Interacts with STXBP6. Interacts (GDP-bound form) with ZFYVE27. Interacts with BIRC6/bruce. May interact with TBC1D14. Interacts with UNC119; in a cell cycle-dependent manner. GDP-bound and nucleotide-free forms interact with SH3BP5. Interacts (GDP-bound form) with KIF5A in a ZFYVE27-dependent manner. Interacts (GDP-bound form) with RELCH. Found in a complex composed of RELCH, OSBP1 and RAB11A. Interacts with TBC1D12. Interacts with DEF6. Interacts with ATP9A. Forms a heterotetramer with RAB11FIP3; the GTP-bound form is preferred for binding. Forms a complex with Rabin8/RAB3IP and RAB11FIP3, probably a heterohexamer with two of each protein subunit, where Rabin8/RAB3IP and RAB11FIP3 simultaneously bind to RAB11A; the complex promotes preciliary trafficking and cilia growth. Forms a complex containing RAB11A, ASAP1, Rabin8/RAB3IP, RAP11FIP3 and ARF4; the complex promotes preciliary trafficking; the complex binds to RHO in photoreceptor cells and promotes RHO ciliary transport. Interacts (GTP-bound form) with WDR44; the interaction prevents RAB11A-RAB3IP-RAB11FIP3 complex formation. It depends on Mg(2+) as a cofactor. Detected in various tissues, such as brain, testis, spleen, and heart.

The protein localises to the cell membrane. Its subcellular location is the endosome membrane. It is found in the recycling endosome membrane. The protein resides in the cleavage furrow. It localises to the cytoplasmic vesicle. The protein localises to the phagosome. Its subcellular location is the cytoplasmic vesicle membrane. It is found in the golgi apparatus. The protein resides in the trans-Golgi network. It catalyses the reaction GTP + H2O = GDP + phosphate + H(+). With respect to regulation, regulated by guanine nucleotide exchange factors (GEFs) which promote the exchange of bound GDP for free GTP. Regulated by GTPase activating proteins (GAPs) which increase the GTP hydrolysis activity. Inhibited by GDP dissociation inhibitors (GDIs) which prevent Rab-GDP dissociation. The small GTPases Rab are key regulators of intracellular membrane trafficking, from the formation of transport vesicles to their fusion with membranes. Rabs cycle between an inactive GDP-bound form and an active GTP-bound form that is able to recruit to membranes different set of downstream effectors directly responsible for vesicle formation, movement, tethering and fusion. The small Rab GTPase RAB11A regulates endocytic recycling. Forms a functional Rab11/RAB11FIP3/dynein complex that regulates the movement of peripheral sorting endosomes (SE) along microtubule tracks toward the microtubule organizing center/centrosome, generating the endosomal recycling compartment (ERC). Acts as a major regulator of membrane delivery during cytokinesis. Together with MYO5B and RAB8A participates in epithelial cell polarization. Together with Rabin8/RAB3IP, RAB8A, the exocyst complex, PARD3, PRKCI, ANXA2, CDC42 and DNMBP promotes transcytosis of PODXL to the apical membrane initiation sites (AMIS), apical surface formation and lumenogenesis. Together with MYO5B participates in CFTR trafficking to the plasma membrane and TF (Transferrin) recycling in nonpolarized cells. Required in a complex with MYO5B and RAB11FIP2 for the transport of NPC1L1 to the plasma membrane. Participates in the sorting and basolateral transport of CDH1 from the Golgi apparatus to the plasma membrane. Regulates the recycling of FCGRT (receptor of Fc region of monomeric IgG) to basolateral membranes. May also play a role in melanosome transport and release from melanocytes. Promotes Rabin8/RAB3IP preciliary vesicular trafficking to mother centriole by forming a ciliary targeting complex containing Rab11, ASAP1, Rabin8/RAB3IP, RAB11FIP3 and ARF4, thereby regulating ciliogenesis initiation. On the contrary, upon LPAR1 receptor signaling pathway activation, interaction with phosphorylated WDR44 prevents Rab11-RAB3IP-RAB11FIP3 complex formation and cilia growth. Participates in the export of a subset of neosynthesized proteins through a Rab8-Rab10-Rab11-endososomal dependent export route via interaction with WDR44. The sequence is that of Ras-related protein Rab-11A from Rattus norvegicus (Rat).